We begin with the raw amino-acid sequence, 315 residues long: Glutathione synthetase (315 aa).

The ATP-grasp domain maps to 125 to 310 (KLFTAWFSEF…ITGMLFDAIE (186 aa)). An ATP-binding site is contributed by 151-207 (HQAKGDIILKPLDGMGGTSIFRVKQDDPNLGVIIETLTQYGNQYAMAQAFIPEITKG). Residues E281 and N283 each coordinate Mg(2+).

The protein belongs to the prokaryotic GSH synthase family. It depends on Mg(2+) as a cofactor. The cofactor is Mn(2+).

It catalyses the reaction gamma-L-glutamyl-L-cysteine + glycine + ATP = glutathione + ADP + phosphate + H(+). The protein operates within sulfur metabolism; glutathione biosynthesis; glutathione from L-cysteine and L-glutamate: step 2/2. The sequence is that of Glutathione synthetase from Shewanella oneidensis (strain ATCC 700550 / JCM 31522 / CIP 106686 / LMG 19005 / NCIMB 14063 / MR-1).